Reading from the N-terminus, the 901-residue chain is MAAQNEQRSERIKTTPYLEGDVLSSDSGPLLSVFALQEIMQKVRQVQADYMTATREVDFTVPDVQKILDDIKTLAAEQVYKIVKVPNILFRHIVMQSRDRVLRVDTYYEEMSQVGDVITEDEPEKFYSTIIKKVRFIRGKGSFILHDIPTRDHRGMEVAEPEVLGVEFKNVLPVLTAEHRAMIQNALDGSIIENGNVATRDVDVFIGACSEPIYRIYNRLQGYIEAVQLQELRNSIGWLERLGLRKRITYSQEVLTDFRRQDTIWVLALQLPVNPQVVWDVPRSSIANLIMNIATCLPTGEYIAPNPRISSITLTQRITTTGPFAILTGSTPTAQQLNDVRKIYLALMFPGQIILDLKIDPGERMDPAVRMVAGVVGHLLFTAGGRFTNLTQNMARQLDIALNDYLLYMYNTRVQVNYGPTGEPLDFQIGRNQYDCNVFRADFATGTGYNGWATIDVEYRDPAPYVHAQRYIRYCGIDSRELINPTTYGIGMTYHCYNEMLRMLVAAGKDSEAAYFRSMLPFHMVRFARINQIINEDLHSVFSLPDDMFNALLPDLIAGAHQNADPVVLDVSWISLWFAFNRSFEPTHRNEMLEIAPLIESVYASELSVMKVDMRHLSLMQRRFPDVLIQARPSHFWKAVLNDSPEAVKAVMNLSHSHNFINIRDMMRWVMLPSLQPSLKLVLEEEAWAAANDFEDLMLTDQVYMHRDMLPEPRLDDVERFRQEGFYYTNMLEAPPEIDRVVQYTYEIERLQANMGQFRAALRRIMDDDDWVRFGGVLRTVRVKFFDARPPDDILQGLPFSYDTNEKGGLSYATIKYATETTIFYQIYNAEFSNTPDSLVLINPTYTMTKVFINKRIVERVRVGQILAVLNRRFVAYKGKMRIMDITQSLKMGTKLAAPTV.

This sequence belongs to the orbivirus VP3 family.

Its subcellular location is the virion. The VP3 protein is one of the five proteins (with VP1, VP4, VP6 and VP7) which form the inner capsid of the virus. This is Core protein VP3 (Segment-3) from Bluetongue virus 11 (isolate USA) (BTV 11).